A 255-amino-acid polypeptide reads, in one-letter code: Probable iron chelatin transport ATP-binding protein HP_0888 (255 aa).

The region spanning Leu-3–Pro-240 is the ABC transporter domain. Ala-35–Thr-42 contributes to the ATP binding site.

The protein belongs to the ABC transporter superfamily.

The protein resides in the cell inner membrane. In terms of biological role, part of a binding-protein-dependent transport system for an iron chelatin. Probably responsible for energy coupling to the transport system (Potential). The chain is Probable iron chelatin transport ATP-binding protein HP_0888 from Helicobacter pylori (strain ATCC 700392 / 26695) (Campylobacter pylori).